Reading from the N-terminus, the 603-residue chain is Linalool synthase Tps-5031L19, chloroplastic (603 aa).

The N-terminal 36 residues, 1-36 (MSSMRTYVAIMKKPSVEHVDNVDKKASKPSWRVSLS), are a transit peptide targeting the chloroplast. Residues Arg-322, Asp-359, Asp-363, Arg-500, and Asp-503 each contribute to the (2E)-geranyl diphosphate site. Positions 359 and 363 each coordinate Mg(2+). The DDXXD motif signature appears at 359–363 (DDVYD). Mg(2+) is bound by residues Asp-503, Thr-507, and Glu-511.

The protein belongs to the terpene synthase family. Tpsb subfamily. In terms of assembly, monomer. The cofactor is Mg(2+). Mn(2+) is required as a cofactor.

It is found in the plastid. It localises to the chloroplast. The catalysed reaction is (2E)-geranyl diphosphate + H2O = linalool + diphosphate. Its pathway is secondary metabolite biosynthesis; terpenoid biosynthesis. Monoterpene synthase (mono-TPS) involved in the biosynthesis of monoterpenes natural products. Catalyzes the conversion of (2E)-geranyl diphosphate (GPP) into linalool. This Perilla frutescens var. hirtella (Perilla citriodora) protein is Linalool synthase Tps-5031L19, chloroplastic.